Reading from the N-terminus, the 143-residue chain is Nucleoside diphosphate kinase (143 aa).

Residues lysine 11, phenylalanine 59, arginine 87, threonine 93, arginine 104, and asparagine 114 each contribute to the ATP site. Residue histidine 117 is the Pros-phosphohistidine intermediate of the active site.

It belongs to the NDK family. As to quaternary structure, homotetramer. Mg(2+) is required as a cofactor.

The protein localises to the cytoplasm. It catalyses the reaction a 2'-deoxyribonucleoside 5'-diphosphate + ATP = a 2'-deoxyribonucleoside 5'-triphosphate + ADP. It carries out the reaction a ribonucleoside 5'-diphosphate + ATP = a ribonucleoside 5'-triphosphate + ADP. Functionally, major role in the synthesis of nucleoside triphosphates other than ATP. The ATP gamma phosphate is transferred to the NDP beta phosphate via a ping-pong mechanism, using a phosphorylated active-site intermediate. This chain is Nucleoside diphosphate kinase, found in Stutzerimonas stutzeri (strain A1501) (Pseudomonas stutzeri).